A 1289-amino-acid chain; its full sequence is Ethylene-insensitive protein 2.1 (1289 aa).

The next 5 membrane-spanning stretches (helical) occupy residues 18–38 (LLPAVGPGLLIAIGYVDPGKW), 48–68 (FGFDLVLPMLLFNFVAILCQY), 96–116 (FLGVQAALSVIALDLTMILGI), 128–148 (LSTCVSLAAAEAILFPFFATL), and 155–175 (SFLCTCIAGFILLLYFFGVLI). Asn-185 carries N-linked (GlcNAc...) asparagine glycosylation. A helical membrane pass occupies residues 199–219 (LMSLLGASIMPHNFFLHSAIV). Residue Asn-227 is glycosylated (N-linked (GlcNAc...) asparagine). Transmembrane regions (helical) follow at residues 235–255 (LNHFFAILCIFSGIYLVNFVL), 260–280 (ANVFHSTGLVLLTFPDAMSLM), 288–308 (VAPFGFSLILFFANQITAFSW), 335–355 (IIAVVPALYCVWTSGVEGIYQ), 356–376 (LLILTQVMVALLLPSSVIPLF), 393–413 (FLEFVALISFMGMLGIKIIFV), and 439–459 (YIVLLITACSSFCLMLWLAAT). Residue Asn-521 is glycosylated (N-linked (GlcNAc...) asparagine). The interval 611–659 (LHTEKEDDEGDNWEPEDSSKGVPGSTLSLTSDGPGSFRSLSGKSDAGGN) is disordered. The segment covering 616–626 (EDDEGDNWEPE) has biased composition (acidic residues). Residues 635–652 (STLSLTSDGPGSFRSLSG) are compositionally biased toward polar residues. Residues Ser-646 and Ser-663 each carry the phosphoserine modification. An N-linked (GlcNAc...) asparagine glycan is attached at Asn-745. The tract at residues 792-816 (SIADSSERRYSGVRTPPSSDGWDNQ) is disordered. A compositionally biased stretch (polar residues) spans 807-816 (PPSSDGWDNQ). Position 819 is a phosphothreonine (Thr-819). Ser-923 is subject to Phosphoserine. Asn-1025 carries N-linked (GlcNAc...) asparagine glycosylation. A disordered region spans residues 1208–1227 (HRSSPPASNGMLPPASKPGR). The Nuclear localization signal motif lies at 1274–1281 (LKRYKRRL).

This sequence belongs to the NRAMP (TC 2.A.55) family.

It localises to the endoplasmic reticulum membrane. Its subcellular location is the nucleus. The protein resides in the cytoplasm. Its function is as follows. Central factor in signaling pathways regulated by ethylene (ET) and involved in various processes including development, plant defense, senescence, nucleotide sugar flux, and tropisms. Functionally, trafficking signal inducing ethylene response. The nuclear localization is both necessary and sufficient to activate EIN3-mediated transcription and ethylene responses. This is Ethylene-insensitive protein 2.1 from Populus trichocarpa (Western balsam poplar).